A 747-amino-acid polypeptide reads, in one-letter code: Meprin A subunit alpha (747 aa).

A signal peptide spans M1–A20. Positions V21–R64 are excised as a propeptide. N-linked (GlcNAc...) asparagine glycosylation is found at N28 and N139. In terms of domain architecture, Peptidase M12A spans N65–T259. Residues N65 to M713 are Extracellular-facing. 3 disulfide bridges follow: C106–C258, C127–C146, and C268–C430. H154 is a binding site for Zn(2+). Residue E155 is part of the active site. H158 and H164 together coordinate Zn(2+). N221, N257, N317, N413, N439, N533, and N540 each carry an N-linked (GlcNAc...) asparagine glycan. In terms of domain architecture, MAM spans T263–A432. Residues G433–F594 form the MATH domain. Positions E638 to E663 are disordered. The EGF-like domain occupies F671–Q711. 3 disulfide bridges follow: C675–C686, C680–C695, and C697–C710. A helical transmembrane segment spans residues H714–T741. Residues N742–Q747 lie on the Cytoplasmic side of the membrane.

As to quaternary structure, homotetramer consisting of disulfide-linked alpha subunits, homooligomer consisting of disulfide-linked alpha subunit homodimers, or heterotetramer of two alpha and two beta subunits formed by non-covalent association of two disulfide-linked heterodimers. Genetic factors determine which oligomer(s) will be formed (strain-specific). Interacts with MBL2 through its carbohydrate moiety. This interaction may inhibit its catalytic activity. Zn(2+) serves as cofactor. In terms of processing, N-glycosylated; contains GlcNAc, galactose, mannose and a small amount of fucose. As to expression, kidney, intestinal brush borders and salivary ducts.

Its subcellular location is the membrane. The enzyme catalyses Hydrolysis of protein and peptide substrates preferentially on carboxyl side of hydrophobic residues.. Its activity is regulated as follows. Inhibited by metal ion chelators EDTA and 1,10-phenanthroline, bradykinin analogs, cysteine, CONA65, and several hydroxamate compounds, particularly tyrosine hydroxamate. Not inhibited by 3,4-dichloroisocourmarin, soybean trypsin inhibitor, or the cysteine proteinase inhibitors iodoacetic acid and E-64. This is Meprin A subunit alpha (Mep1a) from Mus musculus (Mouse).